The following is a 262-amino-acid chain: Acyl-coenzyme A diphosphatase FITM2 (262 aa).

Residues 1-23 (MEHLERCAWVLRGTLVRAAVRRY) are Cytoplasmic-facing. A helical membrane pass occupies residues 24–44 (LPWALAASMLAGSLLKELSPL). The Lumenal portion of the chain corresponds to 45–57 (PESYLSNKRNVLN). Residues 58 to 78 (VYFVKVAWAWTFCLLLPFIAL) traverse the membrane as a helical segment. Topologically, residues 79 to 93 (TNYHLTGKAGLVLRR) are cytoplasmic. Residues 94–114 (LSTLLVGTAIWYVCTAIFSNV) form a helical membrane-spanning segment. Over 115–145 (EHYTGSCYQSPALEGVRNEPLSKQQCHGQGG) the chain is Lumenal. Residues 146 to 166 (FWHGFDISGHSFLLTFCALMI) form a helical membrane-spanning segment. Residue H155 is part of the active site. Residues 167 to 185 (VEEMAVLHEVKTDRSHCLH) lie on the Cytoplasmic side of the membrane. A helical transmembrane segment spans residues 186-206 (VAITALVVALGFLTFIWVWMF). Topologically, residues 207–218 (LCTAVYFHNLSQ) are lumenal. The active site involves H214. Residues 219–239 (KVFGTLFGLLGWYGTYGFWYL) traverse the membrane as a helical segment. Residues 240-262 (KSFSPGLPPQSCSSNLKQDSYKR) lie on the Cytoplasmic side of the membrane.

The protein belongs to the FIT family. FIT2 subfamily.

Its subcellular location is the endoplasmic reticulum membrane. The catalysed reaction is an acyl-CoA + H2O = an acyl-4'-phosphopantetheine + adenosine 3',5'-bisphosphate + 2 H(+). The enzyme catalyses (9Z)-octadecenoyl-CoA + H2O = S-(9Z-octadecenoyl)-4'-phosphopantetheine + adenosine 3',5'-bisphosphate + 2 H(+). It carries out the reaction (5Z,8Z,11Z,14Z)-eicosatetraenoyl-CoA + H2O = S-(5Z,8Z,11Z,14Z-eicosatetraenoyl)-4'-phosphopantetheine + adenosine 3',5'-bisphosphate + 2 H(+). It catalyses the reaction hexadecanoyl-CoA + H2O = S-hexadecanoyl-4'-phosphopantetheine + adenosine 3',5'-bisphosphate + 2 H(+). Its function is as follows. Fatty acyl-coenzyme A (CoA) diphosphatase that hydrolyzes fatty acyl-CoA to yield acyl-4'-phosphopantetheine and adenosine 3',5'-bisphosphate. Preferentially hydrolyzes unsaturated long-chain acyl-CoA substrates such as oleoyl-CoA/(9Z)-octadecenoyl-CoA and arachidonoyl-CoA/(5Z,8Z,11Z,14Z)-eicosatetraenoyl-CoA in the endoplasmic reticulum (ER) lumen. This catalytic activity is required for maintaining ER structure and for lipid droplets (LDs) biogenesis, which are lipid storage organelles involved in maintaining lipid and energy homeostasis. Directly binds to diacylglycerol (DAGs) and triacylglycerol, which is also important for LD biogenesis. May support directional budding of nacent LDs from the ER into the cytosol by reducing DAG levels at sites of LD formation. Plays a role in the regulation of cell morphology and cytoskeletal organization. The protein is Acyl-coenzyme A diphosphatase FITM2 of Sus scrofa (Pig).